The chain runs to 339 residues: MRVYYDRDADLNLIKGKKVAVVGYGSQGHAHALNLKDSGVKDVAIALRKGSSSAKKAEGAGFKVMDVAEAAKWADVVMMLTPDELQADIYRDHLHDNMKKGAALLFAHGLNVHFNLIEPREDLDVLMVAPKGPGHTVRGEYQRGGGVPCLLAIHKDSSGNAHDLGLSYGSAIGGGRAGIIETSFREETETDLFGEQAVLCGGTVELIRAGFETLVEAGYAPEMAYFECLHEMKLIVDLIYEGGIANMNYSISNTAEYGEYVSGPRVITAETKAEMKRILGDIQSGRFARDWMLENKVNQSSFKATRARNNKHQIEEVGARLRDMMPWIKKGALVDKSKN.

A KARI N-terminal Rossmann domain is found at 1-182 (MRVYYDRDAD…GGGRAGIIET (182 aa)). NADP(+)-binding positions include 24-27 (YGSQ), arginine 48, serine 51, serine 53, and 83-86 (DELQ). Residue histidine 108 is part of the active site. NADP(+) is bound at residue glycine 134. Residues 183–328 (SFREETETDL…ARLRDMMPWI (146 aa)) enclose the KARI C-terminal knotted domain. Residues aspartate 191, glutamate 195, glutamate 227, and glutamate 231 each contribute to the Mg(2+) site. Residue serine 252 participates in substrate binding.

Belongs to the ketol-acid reductoisomerase family. Mg(2+) serves as cofactor.

It catalyses the reaction (2R)-2,3-dihydroxy-3-methylbutanoate + NADP(+) = (2S)-2-acetolactate + NADPH + H(+). The enzyme catalyses (2R,3R)-2,3-dihydroxy-3-methylpentanoate + NADP(+) = (S)-2-ethyl-2-hydroxy-3-oxobutanoate + NADPH + H(+). It functions in the pathway amino-acid biosynthesis; L-isoleucine biosynthesis; L-isoleucine from 2-oxobutanoate: step 2/4. Its pathway is amino-acid biosynthesis; L-valine biosynthesis; L-valine from pyruvate: step 2/4. Involved in the biosynthesis of branched-chain amino acids (BCAA). Catalyzes an alkyl-migration followed by a ketol-acid reduction of (S)-2-acetolactate (S2AL) to yield (R)-2,3-dihydroxy-isovalerate. In the isomerase reaction, S2AL is rearranged via a Mg-dependent methyl migration to produce 3-hydroxy-3-methyl-2-ketobutyrate (HMKB). In the reductase reaction, this 2-ketoacid undergoes a metal-dependent reduction by NADPH to yield (R)-2,3-dihydroxy-isovalerate. This Afipia carboxidovorans (strain ATCC 49405 / DSM 1227 / KCTC 32145 / OM5) (Oligotropha carboxidovorans) protein is Ketol-acid reductoisomerase (NADP(+)).